The chain runs to 145 residues: Photosystem I reaction center subunit XI (145 aa).

3 consecutive transmembrane segments (helical) span residues 48–68 (LEIGMAHGYFLIGPFYILGPL), 75–95 (LLVGLFSAFGLILILTLGLTI), and 125–145 (IGAFGGASVAYVLLDNISFFA).

This sequence belongs to the PsaL family.

Its subcellular location is the plastid. It localises to the chloroplast thylakoid membrane. In Emiliania huxleyi (Coccolithophore), this protein is Photosystem I reaction center subunit XI.